The chain runs to 352 residues: NADP-dependent oxidoreductase RED1 (352 aa).

NADP(+) is bound by residues 166–169 (GAVG), Lys-192, Tyr-208, Asn-231, and 285–287 (FIV).

The protein belongs to the NADP-dependent oxidoreductase L4BD family.

Its pathway is mycotoxin biosynthesis. Its function is as follows. NADP-dependent oxidoreductase; part of the Tox1B locus, one of the 2 loci that mediate the biosynthesis of T-toxin, a family of linear polyketides 37 to 45 carbons in length, of which the major component is 41 carbons, and which leads to high virulence to maize. One of the PKSs (PKS1 or PKS2) could synthesize a precursor, used subsequently by the other PKS as starter unit, to add additional carbons. Variability in the length of the final carbon backbone C35-47 could be achieved by varying the number of condensation cycles, or use of different starter or extender units or might be due to decarboxylation of the penultimate product, catalyzed by DEC1. Additional proteins are required for the biosynthesis of T-toxin, including oxidoreductases RED1, RED2, RED3, LAM1 and OXI1, as well as esterase TOX9. This is NADP-dependent oxidoreductase RED1 from Cochliobolus heterostrophus (strain C4 / ATCC 48331 / race T) (Southern corn leaf blight fungus).